Here is a 327-residue protein sequence, read N- to C-terminus: Regulatory protein MsrR (327 aa).

A compositionally biased stretch (basic and acidic residues) spans 1–18 (MDKETNDNEYRRQSEHRT). The interval 1-24 (MDKETNDNEYRRQSEHRTSAPKRK) is disordered. The Cytoplasmic portion of the chain corresponds to 1-31 (MDKETNDNEYRRQSEHRTSAPKRKKKKKIRK). A helical; Signal-anchor for type II membrane protein transmembrane segment spans residues 32–52 (LPIILLIVVILLIALVVYIVH). At 53–327 (SYNSGVEYAK…QAIKDFLDED (275 aa)) the chain is on the extracellular side.

Belongs to the LytR/CpsA/Psr (LCP) family.

It is found in the cell membrane. In terms of biological role, involved in SarA attenuation. Affects resistance to oxacillin and teicoplanin, as well as the synthesis of virulence factors. In Staphylococcus aureus (strain Mu50 / ATCC 700699), this protein is Regulatory protein MsrR (msrR).